Here is a 310-residue protein sequence, read N- to C-terminus: MAPKIFIDGEHGTTGLQIRTRMAGRRDVELLSIPEAERRNAAMREDMLNSADIAMLCLPDDASKEAVQMVSANNNVRVIDTSTAFRVNPGWAYGFAEMDKEQAEKIASARFVSNPGCYPTGAIGLIRPLRAAGILPDGYPVTVNAVSGYSGGGKQMIAQMENPDHPDAITAPHFLYGLPLTHKHVPEMTVHGLLDRAPIFSPSVGKFAQGMIVQVPLHLDDLAEGTTMESIHAALVAHYAGQEIVTVVPLSDSKALARVNAVELEGKDTMKLFVFGTPGGSQVNLVALLDNLGKGASGAAVQNMDLMLAS.

The active site involves Cys-117.

It belongs to the NAGSA dehydrogenase family. Type 2 subfamily.

Its subcellular location is the cytoplasm. The catalysed reaction is N-acetyl-L-glutamate 5-semialdehyde + phosphate + NADP(+) = N-acetyl-L-glutamyl 5-phosphate + NADPH + H(+). It participates in amino-acid biosynthesis; L-arginine biosynthesis; N(2)-acetyl-L-ornithine from L-glutamate: step 3/4. Catalyzes the NADPH-dependent reduction of N-acetyl-5-glutamyl phosphate to yield N-acetyl-L-glutamate 5-semialdehyde. This chain is N-acetyl-gamma-glutamyl-phosphate reductase, found in Rhizobium etli (strain ATCC 51251 / DSM 11541 / JCM 21823 / NBRC 15573 / CFN 42).